Consider the following 538-residue polypeptide: CTP synthase (538 aa).

The interval 1–265 (MARYIFVTGG…DLQVLNYFKL (265 aa)) is amidoligase domain. Ser-13 contacts CTP. Position 13 (Ser-13) interacts with UTP. Residues 14-19 (SLGKGL) and Asp-71 each bind ATP. 2 residues coordinate Mg(2+): Asp-71 and Glu-139. Residues 146 to 148 (DIE), 186 to 191 (KTKPTQ), and Lys-222 each bind CTP. UTP-binding positions include 186-191 (KTKPTQ) and Lys-222. Residues 291 to 538 (NIAIIGKYVE…SFIKAAKNHK (248 aa)) form the Glutamine amidotransferase type-1 domain. Gly-353 contacts L-glutamine. Cys-380 serves as the catalytic Nucleophile; for glutamine hydrolysis. L-glutamine-binding positions include 381-384 (YGMQ), Glu-404, and Arg-468. Catalysis depends on residues His-513 and Glu-515.

The protein belongs to the CTP synthase family. In terms of assembly, homotetramer.

It carries out the reaction UTP + L-glutamine + ATP + H2O = CTP + L-glutamate + ADP + phosphate + 2 H(+). The enzyme catalyses L-glutamine + H2O = L-glutamate + NH4(+). The catalysed reaction is UTP + NH4(+) + ATP = CTP + ADP + phosphate + 2 H(+). It functions in the pathway pyrimidine metabolism; CTP biosynthesis via de novo pathway; CTP from UDP: step 2/2. With respect to regulation, allosterically activated by GTP, when glutamine is the substrate; GTP has no effect on the reaction when ammonia is the substrate. The allosteric effector GTP functions by stabilizing the protein conformation that binds the tetrahedral intermediate(s) formed during glutamine hydrolysis. Inhibited by the product CTP, via allosteric rather than competitive inhibition. Functionally, catalyzes the ATP-dependent amination of UTP to CTP with either L-glutamine or ammonia as the source of nitrogen. Regulates intracellular CTP levels through interactions with the four ribonucleotide triphosphates. This Pelagibacter ubique (strain HTCC1062) protein is CTP synthase.